A 145-amino-acid chain; its full sequence is Oocyte zinc finger protein XlCOF8.4I (145 aa).

The segment at 1 to 25 (HKREADFCSKGNLTNPEISPVEHYP) is disordered. The C2H2-type zinc-finger motif lies at 123–145 (LSCSECGKCFSTYHVLARHQKTH).

It belongs to the krueppel C2H2-type zinc-finger protein family.

It is found in the nucleus. In terms of biological role, may be involved in transcriptional regulation. The chain is Oocyte zinc finger protein XlCOF8.4I from Xenopus laevis (African clawed frog).